The sequence spans 250 residues: 3-deoxy-manno-octulosonate cytidylyltransferase (250 aa).

It belongs to the KdsB family.

It is found in the cytoplasm. It catalyses the reaction 3-deoxy-alpha-D-manno-oct-2-ulosonate + CTP = CMP-3-deoxy-beta-D-manno-octulosonate + diphosphate. It functions in the pathway nucleotide-sugar biosynthesis; CMP-3-deoxy-D-manno-octulosonate biosynthesis; CMP-3-deoxy-D-manno-octulosonate from 3-deoxy-D-manno-octulosonate and CTP: step 1/1. Its pathway is bacterial outer membrane biogenesis; lipopolysaccharide biosynthesis. Its function is as follows. Activates KDO (a required 8-carbon sugar) for incorporation into bacterial lipopolysaccharide in Gram-negative bacteria. The protein is 3-deoxy-manno-octulosonate cytidylyltransferase of Actinobacillus pleuropneumoniae serotype 7 (strain AP76).